Here is a 508-residue protein sequence, read N- to C-terminus: Glycerol kinase (508 aa).

Threonine 15 lines the ADP pocket. ATP is bound by residues threonine 15, serine 16, and serine 17. Residue threonine 15 coordinates sn-glycerol 3-phosphate. Residue arginine 19 participates in ADP binding. 4 residues coordinate sn-glycerol 3-phosphate: arginine 85, glutamate 86, tyrosine 138, and aspartate 251. Positions 85, 86, 138, 251, and 252 each coordinate glycerol. The ADP site is built by threonine 273, glycine 317, and glycine 419. ATP contacts are provided by threonine 273, glycine 317, and glycine 419.

The protein belongs to the FGGY kinase family.

The enzyme catalyses glycerol + ATP = sn-glycerol 3-phosphate + ADP + H(+). It participates in polyol metabolism; glycerol degradation via glycerol kinase pathway; sn-glycerol 3-phosphate from glycerol: step 1/1. Its activity is regulated as follows. Inhibited by fructose 1,6-bisphosphate (FBP). Functionally, key enzyme in the regulation of glycerol uptake and metabolism. Catalyzes the phosphorylation of glycerol to yield sn-glycerol 3-phosphate. This is Glycerol kinase from Mycoplasma genitalium (strain ATCC 33530 / DSM 19775 / NCTC 10195 / G37) (Mycoplasmoides genitalium).